Here is a 222-residue protein sequence, read N- to C-terminus: UPF0758 protein Ppha_0935 (222 aa).

The MPN domain maps to 100–222 (KIQAARDVFE…CFSFRESGLL (123 aa)). Positions 171, 173, and 184 each coordinate Zn(2+). The JAMM motif motif lies at 171–184 (HNHPSGDVEPSNAD).

Belongs to the UPF0758 family.

This Pelodictyon phaeoclathratiforme (strain DSM 5477 / BU-1) protein is UPF0758 protein Ppha_0935.